The following is a 639-amino-acid chain: Putative oxidoreductase UacF (639 aa).

4Fe-4S ferredoxin-type domains lie at 3–32, 47–77, 78–107, 110–139, and 201–235; these read KFIA…ENWP, KGQA…TFQS, DSVQ…MVDT, QKCD…LMDD, and QQAT…YIRL. [4Fe-4S] cluster is bound by residues Cys-12, Cys-15, Cys-18, Cys-22, Cys-56, Cys-59, Cys-64, Cys-68, Cys-87, Cys-90, Cys-93, Cys-97, Cys-112, Cys-115, Cys-125, Cys-129, Cys-210, Cys-213, Cys-219, and Cys-223.

[4Fe-4S] cluster serves as cofactor.

Its function is as follows. Involved in formate-dependent uric acid degradation under microaerobic and anaerobic conditions. May reduce the enzymes necessary for uric acid degradation. The sequence is that of Putative oxidoreductase UacF from Escherichia coli (strain K12).